The chain runs to 68 residues: UPF0435 protein Sca_1453 (68 aa).

The protein belongs to the UPF0435 family.

This is UPF0435 protein Sca_1453 from Staphylococcus carnosus (strain TM300).